The primary structure comprises 266 residues: Calpain small subunit 1 (266 aa).

Residue methionine 1 is modified to N-acetylmethionine. Serine 6 carries the phosphoserine modification. The 35-residue stretch at 94–128 folds into the EF-hand 1; atypical domain; that stretch reads EEVRQFRRLFAQLAGDDMEVSATELMNILNKVVTR. The Ca(2+) site is built by alanine 107, aspartate 110, glutamate 112, glutamate 117, aspartate 135, aspartate 150, aspartate 152, threonine 154, lysine 156, and glutamate 161. EF-hand domains follow at residues 137 to 170, 167 to 202, 203 to 231, and 232 to 266; these read FGID…NNIK, NNIK…AGFH, LNEH…ISCL, and VRLD…TMYS. Lysine 177 is modified (N6-acetyllysine). Aspartate 180, aspartate 182, serine 184, threonine 186, glutamate 191, and aspartate 223 together coordinate Ca(2+).

Homodimer or heterodimer of a large (catalytic) and a small (regulatory) subunit. In presence of calcium, the heterodimer dissociates.

Its subcellular location is the cytoplasm. The protein localises to the cell membrane. Functionally, regulatory subunit of the calcium-regulated non-lysosomal thiol-protease which catalyzes limited proteolysis of substrates involved in cytoskeletal remodeling and signal transduction. Essential for embryonic development. The chain is Calpain small subunit 1 (CAPNS1) from Sus scrofa (Pig).